The chain runs to 189 residues: UPF0301 protein A1C_00165 (189 aa).

It belongs to the UPF0301 (AlgH) family.

The sequence is that of UPF0301 protein A1C_00165 from Rickettsia akari (strain Hartford).